The sequence spans 225 residues: Two-component response regulator ARR8 (225 aa).

A Response regulatory domain is found at 10–145 (HVLAVDDSLF…DLTKLKPHMM (136 aa)). The residue at position 78 (aspartate 78) is a 4-aspartylphosphate.

This sequence belongs to the ARR family. Type-A subfamily. Two-component system major event consists of a His-to-Asp phosphorelay between a sensor histidine kinase (HK) and a response regulator (RR). In plants, the His-to-Asp phosphorelay involves an additional intermediate named Histidine-containing phosphotransfer protein (HPt). This multistep phosphorelay consists of a His-Asp-His-Asp sequential transfer of a phosphate group between first a His and an Asp of the HK protein, followed by the transfer to a conserved His of the HPt protein and finally the transfer to an Asp in the receiver domain of the RR protein. In terms of tissue distribution, predominantly expressed in roots.

It localises to the nucleus. In terms of biological role, functions as a response regulator involved in His-to-Asp phosphorelay signal transduction system. Phosphorylation of the Asp residue in the receiver domain activates the ability of the protein to promote the transcription of target genes. Type-A response regulators seem to act as negative regulators of the cytokinin signaling. This is Two-component response regulator ARR8 (ARR8) from Arabidopsis thaliana (Mouse-ear cress).